We begin with the raw amino-acid sequence, 225 residues long: GrpE protein homolog 2, mitochondrial (225 aa).

The N-terminal 32 residues, 1–32 (MAVRSLWACRLRVQRLLAWSAAWESKGWPLPF), are a transit peptide targeting the mitochondrion. The residue at position 142 (lysine 142) is an N6-acetyllysine.

The protein belongs to the GrpE family. As to quaternary structure, probable component of the PAM complex at least composed of a mitochondrial HSP70 protein, GRPEL1 or GRPEL2, TIMM44, TIMM16/PAM16 and TIMM14/DNAJC19.

The protein resides in the mitochondrion matrix. Essential component of the PAM complex, a complex required for the translocation of transit peptide-containing proteins from the inner membrane into the mitochondrial matrix in an ATP-dependent manner. Seems to control the nucleotide-dependent binding of mitochondrial HSP70 to substrate proteins. Stimulates ATPase activity of mt-HSP70. May also serve to modulate the interconversion of oligomeric (inactive) and monomeric (active) forms of mt-HSP70. The chain is GrpE protein homolog 2, mitochondrial (GRPEL2) from Pongo abelii (Sumatran orangutan).